A 400-amino-acid chain; its full sequence is Golgin-45 (400 aa).

A compositionally biased stretch (polar residues) spans 1–16; it reads MTTKNLETKVTVTSSP. The segment at 1–58 is disordered; sequence MTTKNLETKVTVTSSPIRGAGDGMETEEPPKSVEVTSGVQSRKHHSLQSPWKKAVPSE. Position 15 is a phosphoserine (Ser-15). The short motif at 18 to 22 is the Tankyrase-binding motif element; it reads RGAGD. Ser-49 carries the post-translational modification Phosphoserine. Positions 120 to 213 form a coiled coil; that stretch reads NKELSEVKNV…QLERMSIQCD (94 aa). Thr-348 carries the phosphothreonine modification. Phosphoserine is present on Ser-353. The essential for interaction with GORASP2 stretch occupies residues 394–400; the sequence is RGELIAL.

Interacts with GORASP2. Interacts with the GTP-bound form of RAB2, but not with other Golgi Rab proteins. Identified in a complex with RAB2 and GORASP2. Post-translationally, ADP-ribosylated by tankyrase TNKS and TNKS2. Poly-ADP-ribosylated protein is recognized by RNF146, followed by ubiquitination. Ubiquitinated by RNF146 when poly-ADP-ribosylated, leading to its degradation. Detected in adrenal gland.

It is found in the golgi apparatus membrane. It localises to the nucleus. Its subcellular location is the cytoplasm. Functionally, required for normal Golgi structure and for protein transport from the endoplasmic reticulum (ER) through the Golgi apparatus to the cell surface. In Homo sapiens (Human), this protein is Golgin-45 (BLZF1).